Here is a 61-residue protein sequence, read N- to C-terminus: uncharacterized protein (61 aa).

A run of 2 helical transmembrane segments spans residues 4 to 24 (IIAF…VASM) and 34 to 54 (SSVI…IMPM).

It is found in the cell membrane. This is an uncharacterized protein from Bacillus subtilis (strain 168).